A 510-amino-acid chain; its full sequence is GMP synthase [glutamine-hydrolyzing] (510 aa).

The Glutamine amidotransferase type-1 domain occupies 5 to 195 (LVLVVDFGGQ…LFNVCNLKGD (191 aa)). Catalysis depends on cysteine 82, which acts as the Nucleophile. Residues histidine 169 and glutamate 171 contribute to the active site. The GMPS ATP-PPase domain occupies 196 to 385 (WSMSSFAEQQ…LGIPHKLVWR (190 aa)). 223–229 (SGGVDSS) contacts ATP.

As to quaternary structure, homodimer.

It catalyses the reaction XMP + L-glutamine + ATP + H2O = GMP + L-glutamate + AMP + diphosphate + 2 H(+). The protein operates within purine metabolism; GMP biosynthesis; GMP from XMP (L-Gln route): step 1/1. Catalyzes the synthesis of GMP from XMP. The chain is GMP synthase [glutamine-hydrolyzing] from Clostridium botulinum (strain Okra / Type B1).